The sequence spans 946 residues: Probable inactive ATP-dependent zinc metalloprotease FTSHI 1, chloroplastic (946 aa).

Residues 1–54 (MASIDNVFSLGTRFSIPENPKRSILKHATTSSFSARTQTRWRAPILRRSFTVLC) constitute a chloroplast transit peptide. A run of 3 helical transmembrane segments spans residues 289 to 309 (AVIA…VFAV), 320 to 340 (VVWP…LGVL), and 369 to 389 (VASS…MVLL). ATP is bound at residue 470–477 (GPPGCGKT).

This sequence in the N-terminal section; belongs to the AAA ATPase family. It in the C-terminal section; belongs to the peptidase M41 family. In terms of assembly, oligomer.

Its subcellular location is the plastid. It is found in the chloroplast inner membrane. Its function is as follows. Functions in chloroplast biogenesis and chloroplast division. Required for plastid development during embryogenesis. Might be involved in chaperone functions or play a structural role in the thylakoid FtsH complex. The protein is Probable inactive ATP-dependent zinc metalloprotease FTSHI 1, chloroplastic of Arabidopsis thaliana (Mouse-ear cress).